Here is a 446-residue protein sequence, read N- to C-terminus: Transcription factor SOX-3 (446 aa).

Disordered stretches follow at residues 29 to 48 and 87 to 140; these read PFPP…TESQ and PVGT…DRVK. 2 stretches are compositionally biased toward gly residues: residues 96–107 and 117–134; these read GTGGPAAPGGAG and ANSG…GGGT. Positions 139–207 form a DNA-binding region, HMG box; that stretch reads VKRPMNAFMV…VHMKEYPDYK (69 aa). A 9aaTAD motif is present at residues 399–407; the sequence is DMISMYLPP.

As to quaternary structure, interacts with SOX2 and FGFR1.

The protein localises to the nucleus. Functionally, transcription factor required during the formation of the hypothalamo-pituitary axis. May function as a switch in neuronal development. Keeps neural cells undifferentiated by counteracting the activity of proneural proteins and suppresses neuronal differentiation. Required also within the pharyngeal epithelia for craniofacial morphogenesis. Controls a genetic switch in male development. Is necessary for initiating male sex determination by directing the development of supporting cell precursors (pre-Sertoli cells) as Sertoli rather than granulosa cells. The polypeptide is Transcription factor SOX-3 (SOX3) (Homo sapiens (Human)).